The primary structure comprises 229 residues: Protein-L-isoaspartate O-methyltransferase (229 aa).

The active site involves serine 78.

It belongs to the methyltransferase superfamily. L-isoaspartyl/D-aspartyl protein methyltransferase family.

The protein resides in the cytoplasm. It carries out the reaction [protein]-L-isoaspartate + S-adenosyl-L-methionine = [protein]-L-isoaspartate alpha-methyl ester + S-adenosyl-L-homocysteine. Functionally, catalyzes the methyl esterification of L-isoaspartyl residues in peptides and proteins that result from spontaneous decomposition of normal L-aspartyl and L-asparaginyl residues. It plays a role in the repair and/or degradation of damaged proteins. This Chromohalobacter salexigens (strain ATCC BAA-138 / DSM 3043 / CIP 106854 / NCIMB 13768 / 1H11) protein is Protein-L-isoaspartate O-methyltransferase.